Here is a 157-residue protein sequence, read N- to C-terminus: Endoribonuclease YbeY (157 aa).

Positions 111, 115, and 121 each coordinate Zn(2+).

The protein belongs to the endoribonuclease YbeY family. The cofactor is Zn(2+).

Its subcellular location is the cytoplasm. Single strand-specific metallo-endoribonuclease involved in late-stage 70S ribosome quality control and in maturation of the 3' terminus of the 16S rRNA. This Pseudomonas putida (strain W619) protein is Endoribonuclease YbeY.